Reading from the N-terminus, the 207-residue chain is Peptidyl-tRNA hydrolase (207 aa).

A tRNA-binding site is contributed by tyrosine 14. Histidine 19 (proton acceptor) is an active-site residue. Residues tyrosine 64, asparagine 66, and asparagine 112 each contribute to the tRNA site.

This sequence belongs to the PTH family. As to quaternary structure, monomer.

The protein resides in the cytoplasm. The catalysed reaction is an N-acyl-L-alpha-aminoacyl-tRNA + H2O = an N-acyl-L-amino acid + a tRNA + H(+). Its function is as follows. Hydrolyzes ribosome-free peptidyl-tRNAs (with 1 or more amino acids incorporated), which drop off the ribosome during protein synthesis, or as a result of ribosome stalling. In terms of biological role, catalyzes the release of premature peptidyl moieties from peptidyl-tRNA molecules trapped in stalled 50S ribosomal subunits, and thus maintains levels of free tRNAs and 50S ribosomes. This chain is Peptidyl-tRNA hydrolase, found in Rhodopseudomonas palustris (strain HaA2).